We begin with the raw amino-acid sequence, 224 residues long: DNA mismatch repair protein MutH (224 aa).

It belongs to the MutH family.

It is found in the cytoplasm. Its function is as follows. Sequence-specific endonuclease that cleaves unmethylated GATC sequences. It is involved in DNA mismatch repair. This chain is DNA mismatch repair protein MutH, found in Shewanella amazonensis (strain ATCC BAA-1098 / SB2B).